Consider the following 254-residue polypeptide: H-2 class II histocompatibility antigen, I-E alpha chain (254 aa).

Residues Arg-1 to Asp-24 form the signal peptide. Residues Ile-25–Asn-109 are alpha-1. Over Ile-25–Glu-216 the chain is Extracellular. N-linked (GlcNAc...) asparagine glycosylation is found at Asn-103 and Asn-143. Residues Glu-110–Trp-203 form an alpha-2 region. The 93-residue stretch at Pro-112–Glu-204 folds into the Ig-like C1-type domain. Cys-132 and Cys-188 are joined by a disulfide. The segment at Glu-204–Glu-216 is connecting peptide. Residues Thr-217 to Leu-242 form a helical membrane-spanning segment. Residues Arg-243–Leu-254 are Cytoplasmic-facing.

Belongs to the MHC class II family.

It is found in the membrane. The sequence is that of H-2 class II histocompatibility antigen, I-E alpha chain from Mus musculus (Mouse).